A 498-amino-acid chain; its full sequence is MDTFKVQLQEFFSAGDGADDAPCLDAPNLLEHQKRGIEWMRRRERRGRPHGGVLADDMGLGKTLSVMRLIANDGDDAHKTLIVCPLSLLNHWTAEAKKHNLPLNLRQFHGGDLDESFDDAKAVAITYDTLRAHHKHYKTAGRASGLLARHWHRVVLDEAHVIKNHQTGVHAAACALSADNRWCITGTPIHNRHWDMYAIIHFLRCRPFDNVGVWRMLNRNNDTNRIKSVVNKIVLKRNKAEIALDIPQHDVQDVHVRFDEAEARVYNELKSASQRAYDDAVASADKAGGMQDVLWLLCRLRQVCCHPALTKCAAMFPEHAHIFEPAYESSKCRRALELVQRVLDTPDDKVVLVSQWVEFLQLVAGLLRRRGVPILLYTGQLRVEERTAVENQFNAADSPYRVLLMSIKCGGVGLNLTGGNHIIMLEPHWNPQIELQAQDRIHRMGQKKRTYVYKMIVDEENSIERYMKARQDKKLTFVNKVFDRTALNYEDIKKFFSL.

One can recognise a Helicase ATP-binding domain in the interval 43–206; it reads RERRGRPHGG…YAIIHFLRCR (164 aa). 55–63 is an ATP binding site; that stretch reads ADDMGLGKT. The DEAH box motif lies at 157-160; sequence DEAH. The Helicase C-terminal domain maps to 337-493; it reads ELVQRVLDTP…RTALNYEDIK (157 aa).

This sequence belongs to the SNF2/RAD54 helicase family.

This Orgyia pseudotsugata (Douglas-fir tussock moth) protein is Probable global transactivator (GTA).